We begin with the raw amino-acid sequence, 343 residues long: Protein RecA (343 aa).

Position 66–73 (glycine 66–threonine 73) interacts with ATP.

It belongs to the RecA family.

It is found in the cytoplasm. Functionally, can catalyze the hydrolysis of ATP in the presence of single-stranded DNA, the ATP-dependent uptake of single-stranded DNA by duplex DNA, and the ATP-dependent hybridization of homologous single-stranded DNAs. It interacts with LexA causing its activation and leading to its autocatalytic cleavage. The polypeptide is Protein RecA (Rickettsia africae (strain ESF-5)).